Here is a 431-residue protein sequence, read N- to C-terminus: MRLMTKLGFRALVASCLIAAGGAANAQVNVLITGVGSTQFPIATANFANEAGLPQQVTSIVRADLARSGKFTNIDAGSTPVPETASVDLGAWKAKGANAFVAGSVNREANGQYKVNFILYDTVKQQSLGGLSLTATDTTLRTAGHKIADYIYQKLLGVRGVFATRLSYVIKTGNRYQLQISDSDGQNARIALSSTEPIISPAWSPSGTKVAYVSFERKKPIVYIHDLPTGRRYMVSDQKGNNSAPAWSPDSNTLAVALSLTGNTQIYTVNANGGGLRRLTQSSSIDTEPYYSPDGRWIYFTSDRGGAPQIYRMPAQGESAGAAQRVTFTGSYNTSPRISPDGKLLAYISRTGGGFKLYVQDLQTGAANAITNTNRDESPSFAANGQYLLYATQSGGRNVLAAVPSDGSAPPQILSVQGGSVREPSWGPFMQ.

The N-terminal stretch at 1–26 (MRLMTKLGFRALVASCLIAAGGAANA) is a signal peptide. A disordered region spans residues 411–431 (PQILSVQGGSVREPSWGPFMQ).

Belongs to the TolB family. The Tol-Pal system is composed of five core proteins: the inner membrane proteins TolA, TolQ and TolR, the periplasmic protein TolB and the outer membrane protein Pal. They form a network linking the inner and outer membranes and the peptidoglycan layer.

It localises to the periplasm. Functionally, part of the Tol-Pal system, which plays a role in outer membrane invagination during cell division and is important for maintaining outer membrane integrity. This is Tol-Pal system protein TolB from Burkholderia ambifaria (strain MC40-6).